The chain runs to 78 residues: Acyl carrier protein (78 aa).

The region spanning 2–77 (SEIASRVKAI…DAVAYIEEHA (76 aa)) is the Carrier domain. At Ser37 the chain carries O-(pantetheine 4'-phosphoryl)serine.

It belongs to the acyl carrier protein (ACP) family. Post-translationally, 4'-phosphopantetheine is transferred from CoA to a specific serine of apo-ACP by AcpS. This modification is essential for activity because fatty acids are bound in thioester linkage to the sulfhydryl of the prosthetic group.

The protein resides in the cytoplasm. It functions in the pathway lipid metabolism; fatty acid biosynthesis. Functionally, carrier of the growing fatty acid chain in fatty acid biosynthesis. This is Acyl carrier protein from Bacteroides fragilis (strain ATCC 25285 / DSM 2151 / CCUG 4856 / JCM 11019 / LMG 10263 / NCTC 9343 / Onslow / VPI 2553 / EN-2).